A 322-amino-acid chain; its full sequence is tRNA U34 carboxymethyltransferase (322 aa).

Carboxy-S-adenosyl-L-methionine contacts are provided by residues lysine 90, tryptophan 104, lysine 109, glycine 129, 151-153, 180-181, methionine 196, tyrosine 200, and arginine 315; these read DPS and IE.

The protein belongs to the class I-like SAM-binding methyltransferase superfamily. CmoB family. As to quaternary structure, homotetramer.

The catalysed reaction is carboxy-S-adenosyl-L-methionine + 5-hydroxyuridine(34) in tRNA = 5-carboxymethoxyuridine(34) in tRNA + S-adenosyl-L-homocysteine + H(+). Catalyzes carboxymethyl transfer from carboxy-S-adenosyl-L-methionine (Cx-SAM) to 5-hydroxyuridine (ho5U) to form 5-carboxymethoxyuridine (cmo5U) at position 34 in tRNAs. The protein is tRNA U34 carboxymethyltransferase of Cellvibrio japonicus (strain Ueda107) (Pseudomonas fluorescens subsp. cellulosa).